The primary structure comprises 174 residues: Large ribosomal subunit protein uL10 (174 aa).

Belongs to the universal ribosomal protein uL10 family. As to quaternary structure, part of the ribosomal stalk of the 50S ribosomal subunit. The N-terminus interacts with L11 and the large rRNA to form the base of the stalk. The C-terminus forms an elongated spine to which L12 dimers bind in a sequential fashion forming a multimeric L10(L12)X complex.

Functionally, forms part of the ribosomal stalk, playing a central role in the interaction of the ribosome with GTP-bound translation factors. This Bordetella bronchiseptica (strain ATCC BAA-588 / NCTC 13252 / RB50) (Alcaligenes bronchisepticus) protein is Large ribosomal subunit protein uL10.